The primary structure comprises 128 residues: Iron-sulfur cluster insertion protein ErpA 1 (128 aa).

3 residues coordinate iron-sulfur cluster: cysteine 47, cysteine 111, and cysteine 113.

This sequence belongs to the HesB/IscA family. In terms of assembly, homodimer. The cofactor is iron-sulfur cluster.

Functionally, required for insertion of 4Fe-4S clusters for at least IspG. In Methylococcus capsulatus (strain ATCC 33009 / NCIMB 11132 / Bath), this protein is Iron-sulfur cluster insertion protein ErpA 1.